The primary structure comprises 658 residues: Threonine--tRNA ligase (658 aa).

The TGS domain maps to 1–64; that stretch reads MSNTVSLQFP…GASGKLEIIT (64 aa). Positions 246-548 are catalytic; the sequence is DHRRLGREMD…LIENFAGHMP (303 aa). Zn(2+) contacts are provided by cysteine 343, histidine 394, and histidine 525.

The protein belongs to the class-II aminoacyl-tRNA synthetase family. Homodimer. Zn(2+) serves as cofactor.

Its subcellular location is the cytoplasm. The catalysed reaction is tRNA(Thr) + L-threonine + ATP = L-threonyl-tRNA(Thr) + AMP + diphosphate + H(+). Catalyzes the attachment of threonine to tRNA(Thr) in a two-step reaction: L-threonine is first activated by ATP to form Thr-AMP and then transferred to the acceptor end of tRNA(Thr). Also edits incorrectly charged L-seryl-tRNA(Thr). This chain is Threonine--tRNA ligase, found in Brucella abortus (strain S19).